Here is a 363-residue protein sequence, read N- to C-terminus: Fructose-bisphosphate aldolase (363 aa).

Arginine 56 and lysine 147 together coordinate substrate. Glutamate 188 functions as the Proton acceptor in the catalytic mechanism. Lysine 230 (schiff-base intermediate with dihydroxyacetone-P) is an active-site residue.

Belongs to the class I fructose-bisphosphate aldolase family.

The catalysed reaction is beta-D-fructose 1,6-bisphosphate = D-glyceraldehyde 3-phosphate + dihydroxyacetone phosphate. It participates in carbohydrate degradation; glycolysis; D-glyceraldehyde 3-phosphate and glycerone phosphate from D-glucose: step 4/4. This Schistosoma mansoni (Blood fluke) protein is Fructose-bisphosphate aldolase.